The primary structure comprises 582 residues: Transcription factor tau subunit sfc6 (582 aa).

The disordered stretch occupies residues 1–97; that stretch reads MGPKSKEYEN…SAKKQSSKGL (97 aa). Residues 18 to 39 are compositionally biased toward acidic residues; the sequence is EDNDDDGDFVLENVMSEEDIEI. Over residues 63 to 87 the composition is skewed to polar residues; the sequence is QPLTPSSSKGAGNEPKSQNSSTTRG. WD repeat units follow at residues 221 to 262, 268 to 314, and 326 to 369; these read TQFL…NFKS, HDWG…VKFH, and FNDS…ECPL.

As to quaternary structure, component of the TFIIIC complex including sfc1, sfc3, sfc4, sfc6 and sfc7. The subunits are organized in two globular domains, tauA and tauB, connected by a proteolysis-sensitive and flexible linker. Interacts with sfc1, sfc3 and sfc4.

It is found in the nucleus. Functionally, TFIIIC mediates tRNA and 5S RNA gene activation by binding to intragenic promoter elements. Upstream of the transcription start site, TFIIIC assembles the initiation complex TFIIIB-TFIIIC-tDNA, which is sufficient for RNA polymerase III recruitment and function. Part of the tauB domain of TFIIIC that binds boxB DNA promoter sites of tRNA and similar genes. Cooperates with sfc3 in DNA binding. Localizes to chromatin insulator sequence without recruiting RNA polymerase III and plays a role in nuclear organization. The sequence is that of Transcription factor tau subunit sfc6 from Schizosaccharomyces pombe (strain 972 / ATCC 24843) (Fission yeast).